Reading from the N-terminus, the 235-residue chain is Aspartate/glutamate leucyltransferase (235 aa).

Belongs to the R-transferase family. Bpt subfamily.

It localises to the cytoplasm. The enzyme catalyses N-terminal L-glutamyl-[protein] + L-leucyl-tRNA(Leu) = N-terminal L-leucyl-L-glutamyl-[protein] + tRNA(Leu) + H(+). It catalyses the reaction N-terminal L-aspartyl-[protein] + L-leucyl-tRNA(Leu) = N-terminal L-leucyl-L-aspartyl-[protein] + tRNA(Leu) + H(+). Functionally, functions in the N-end rule pathway of protein degradation where it conjugates Leu from its aminoacyl-tRNA to the N-termini of proteins containing an N-terminal aspartate or glutamate. The chain is Aspartate/glutamate leucyltransferase from Pseudomonas aeruginosa (strain LESB58).